The sequence spans 304 residues: UDP-N-acetylenolpyruvoylglucosamine reductase (304 aa).

The region spanning 33-198 (RVGGPVDILL…ITATFCFESG (166 aa)) is the FAD-binding PCMH-type domain. Residue Arg177 is part of the active site. Catalysis depends on Ser227, which acts as the Proton donor. Glu297 is an active-site residue.

Belongs to the MurB family. It depends on FAD as a cofactor.

It is found in the cytoplasm. The catalysed reaction is UDP-N-acetyl-alpha-D-muramate + NADP(+) = UDP-N-acetyl-3-O-(1-carboxyvinyl)-alpha-D-glucosamine + NADPH + H(+). It participates in cell wall biogenesis; peptidoglycan biosynthesis. In terms of biological role, cell wall formation. This chain is UDP-N-acetylenolpyruvoylglucosamine reductase, found in Clostridium botulinum (strain Eklund 17B / Type B).